A 196-amino-acid polypeptide reads, in one-letter code: Phosphate-specific transport system accessory protein PhoU homolog (196 aa).

Belongs to the PhoU family. Homodimer.

The protein localises to the cytoplasm. In terms of biological role, plays a role in the regulation of phosphate uptake. The polypeptide is Phosphate-specific transport system accessory protein PhoU homolog (Archaeoglobus fulgidus (strain ATCC 49558 / DSM 4304 / JCM 9628 / NBRC 100126 / VC-16)).